The primary structure comprises 150 residues: Protein SprT-like (150 aa).

The SprT-like domain occupies 6-147; sequence LQKLTEDISE…CGKCRGKIKR (142 aa). A Zn(2+)-binding site is contributed by His-67. Glu-68 is a catalytic residue. His-71 contacts Zn(2+).

It belongs to the SprT family. Zn(2+) serves as cofactor.

The protein resides in the cytoplasm. This Bacillus subtilis (strain 168) protein is Protein SprT-like (ydcK).